Here is a 267-residue protein sequence, read N- to C-terminus: Auxin-responsive protein IAA18 (267 aa).

An EAR-like (transcriptional repression) motif is present at residues 42–46 (LELKL). A disordered region spans residues 81–101 (PSSTKTTSHKRTAPGPVVGWP). The 100-residue stretch at 149-248 (GMFVKINMYG…SVKRLRVIKT (100 aa)) folds into the PB1 domain.

It belongs to the Aux/IAA family. Homodimers and heterodimers. Interacts with TPL.

The protein resides in the nucleus. Functionally, aux/IAA proteins are short-lived transcriptional factors that function as repressors of early auxin response genes at low auxin concentrations. Repression is thought to result from the interaction with auxin response factors (ARFs), proteins that bind to the auxin-responsive promoter element (AuxRE). Formation of heterodimers with ARF proteins may alter their ability to modulate early auxin response genes expression. This is Auxin-responsive protein IAA18 (IAA18) from Arabidopsis thaliana (Mouse-ear cress).